The primary structure comprises 663 residues: UvrABC system protein B (663 aa).

One can recognise a Helicase ATP-binding domain in the interval 26 to 414; that stretch reads DGLESGLAKQ…DNVAEQVVRP (389 aa). Residue 39 to 46 participates in ATP binding; that stretch reads GVTGSGKT. The Beta-hairpin motif lies at 92-115; that stretch reads YYDYYQPEAYVPASDTFIEKDASI. The 167-residue stretch at 430 to 596 folds into the Helicase C-terminal domain; it reads QVDDLMSEIR…GINKSVEDIL (167 aa). Residues 624–659 form the UVR domain; the sequence is VKQINALEKQMYSHAQNMEFELAAKIRDEYLLLKEQ.

It belongs to the UvrB family. As to quaternary structure, forms a heterotetramer with UvrA during the search for lesions. Interacts with UvrC in an incision complex.

It localises to the cytoplasm. Functionally, the UvrABC repair system catalyzes the recognition and processing of DNA lesions. A damage recognition complex composed of 2 UvrA and 2 UvrB subunits scans DNA for abnormalities. Upon binding of the UvrA(2)B(2) complex to a putative damaged site, the DNA wraps around one UvrB monomer. DNA wrap is dependent on ATP binding by UvrB and probably causes local melting of the DNA helix, facilitating insertion of UvrB beta-hairpin between the DNA strands. Then UvrB probes one DNA strand for the presence of a lesion. If a lesion is found the UvrA subunits dissociate and the UvrB-DNA preincision complex is formed. This complex is subsequently bound by UvrC and the second UvrB is released. If no lesion is found, the DNA wraps around the other UvrB subunit that will check the other stand for damage. This chain is UvrABC system protein B, found in Legionella pneumophila subsp. pneumophila (strain Philadelphia 1 / ATCC 33152 / DSM 7513).